The primary structure comprises 147 residues: uncharacterized protein (147 aa).

Residues 69–89 (IFFFLSLYLSSIKIPMLILNI) form a helical membrane-spanning segment.

It localises to the membrane. This is an uncharacterized protein from Saccharomyces cerevisiae (strain ATCC 204508 / S288c) (Baker's yeast).